The primary structure comprises 406 residues: Phosphopentomutase (406 aa).

The Mn(2+) site is built by Asp-10, Asp-305, His-310, Asp-346, His-347, and His-358.

This sequence belongs to the phosphopentomutase family. The cofactor is Mn(2+).

It localises to the cytoplasm. It catalyses the reaction 2-deoxy-alpha-D-ribose 1-phosphate = 2-deoxy-D-ribose 5-phosphate. The enzyme catalyses alpha-D-ribose 1-phosphate = D-ribose 5-phosphate. Its pathway is carbohydrate degradation; 2-deoxy-D-ribose 1-phosphate degradation; D-glyceraldehyde 3-phosphate and acetaldehyde from 2-deoxy-alpha-D-ribose 1-phosphate: step 1/2. Isomerase that catalyzes the conversion of deoxy-ribose 1-phosphate (dRib-1-P) and ribose 1-phosphate (Rib-1-P) to deoxy-ribose 5-phosphate (dRib-5-P) and ribose 5-phosphate (Rib-5-P), respectively. The polypeptide is Phosphopentomutase (Vibrio vulnificus (strain CMCP6)).